Here is a 213-residue protein sequence, read N- to C-terminus: Phosphatidylserine decarboxylase proenzyme (213 aa).

The active-site Schiff-base intermediate with substrate; via pyruvic acid is Ser-182. Pyruvic acid (Ser); by autocatalysis is present on Ser-182.

It belongs to the phosphatidylserine decarboxylase family. PSD-A subfamily. In terms of assembly, heterodimer of a large membrane-associated beta subunit and a small pyruvoyl-containing alpha subunit. Requires pyruvate as cofactor. Is synthesized initially as an inactive proenzyme. Formation of the active enzyme involves a self-maturation process in which the active site pyruvoyl group is generated from an internal serine residue via an autocatalytic post-translational modification. Two non-identical subunits are generated from the proenzyme in this reaction, and the pyruvate is formed at the N-terminus of the alpha chain, which is derived from the carboxyl end of the proenzyme. The post-translation cleavage follows an unusual pathway, termed non-hydrolytic serinolysis, in which the side chain hydroxyl group of the serine supplies its oxygen atom to form the C-terminus of the beta chain, while the remainder of the serine residue undergoes an oxidative deamination to produce ammonia and the pyruvoyl prosthetic group on the alpha chain.

It is found in the cell membrane. It carries out the reaction a 1,2-diacyl-sn-glycero-3-phospho-L-serine + H(+) = a 1,2-diacyl-sn-glycero-3-phosphoethanolamine + CO2. It participates in phospholipid metabolism; phosphatidylethanolamine biosynthesis; phosphatidylethanolamine from CDP-diacylglycerol: step 2/2. In terms of biological role, catalyzes the formation of phosphatidylethanolamine (PtdEtn) from phosphatidylserine (PtdSer). The protein is Phosphatidylserine decarboxylase proenzyme of Geotalea daltonii (strain DSM 22248 / JCM 15807 / FRC-32) (Geobacter daltonii).